The sequence spans 73 residues: Disintegrin molossin (73 aa).

In terms of domain architecture, Disintegrin spans 1 to 73 (EAGIECDCGS…ADCPRNRFHA (73 aa)). Disulfide bonds link Cys-6/Cys-21, Cys-8/Cys-16, Cys-15/Cys-38, Cys-29/Cys-35, Cys-34/Cys-59, and Cys-47/Cys-66. The short motif at 51–53 (RGD) is the Cell attachment site element.

This sequence belongs to the venom metalloproteinase (M12B) family. P-II subfamily. P-IIa sub-subfamily. In terms of assembly, monomer (disintegrin). In terms of tissue distribution, expressed by the venom gland.

It localises to the secreted. Its function is as follows. Inhibits fibrinogen interaction with platelets. Acts by binding to alpha-IIb/beta-3 (ITGA2B/ITGB3) on the platelet surface and inhibits aggregation induced by ADP, thrombin, platelet-activating factor and collagen. The sequence is that of Disintegrin molossin from Crotalus molossus molossus (Northern black-tailed rattlesnake).